The chain runs to 417 residues: 4-hydroxy-3-methylbut-2-en-1-yl diphosphate synthase (flavodoxin) (417 aa).

Cys304, Cys307, Cys350, and Glu357 together coordinate [4Fe-4S] cluster.

It belongs to the IspG family. The cofactor is [4Fe-4S] cluster.

It catalyses the reaction (2E)-4-hydroxy-3-methylbut-2-enyl diphosphate + oxidized [flavodoxin] + H2O + 2 H(+) = 2-C-methyl-D-erythritol 2,4-cyclic diphosphate + reduced [flavodoxin]. The protein operates within isoprenoid biosynthesis; isopentenyl diphosphate biosynthesis via DXP pathway; isopentenyl diphosphate from 1-deoxy-D-xylulose 5-phosphate: step 5/6. Functionally, converts 2C-methyl-D-erythritol 2,4-cyclodiphosphate (ME-2,4cPP) into 1-hydroxy-2-methyl-2-(E)-butenyl 4-diphosphate. This Rhizobium rhizogenes (strain K84 / ATCC BAA-868) (Agrobacterium radiobacter) protein is 4-hydroxy-3-methylbut-2-en-1-yl diphosphate synthase (flavodoxin).